A 475-amino-acid polypeptide reads, in one-letter code: Putative aldehyde dehydrogenase SSP0762 (475 aa).

201 to 207 (GDGQGVG) serves as a coordination point for NAD(+). Residues E245 and C279 contribute to the active site.

It belongs to the aldehyde dehydrogenase family.

The catalysed reaction is an aldehyde + NAD(+) + H2O = a carboxylate + NADH + 2 H(+). The polypeptide is Putative aldehyde dehydrogenase SSP0762 (Staphylococcus saprophyticus subsp. saprophyticus (strain ATCC 15305 / DSM 20229 / NCIMB 8711 / NCTC 7292 / S-41)).